The following is a 619-amino-acid chain: DNA mismatch repair protein MutL (619 aa).

Over residues 368-378 (VDEPKQVDEPK) the composition is skewed to basic and acidic residues. The disordered stretch occupies residues 368-403 (VDEPKQVDEPKQSSPVQEPKEEIPSFLPTVESKQND).

The protein belongs to the DNA mismatch repair MutL/HexB family.

Its function is as follows. This protein is involved in the repair of mismatches in DNA. It is required for dam-dependent methyl-directed DNA mismatch repair. May act as a 'molecular matchmaker', a protein that promotes the formation of a stable complex between two or more DNA-binding proteins in an ATP-dependent manner without itself being part of a final effector complex. The sequence is that of DNA mismatch repair protein MutL from Geobacillus sp. (strain WCH70).